Consider the following 146-residue polypeptide: Small ribosomal subunit protein uS5 (146 aa).

The S5 DRBM domain occupies 8 to 71 (FQEAIVKIGR…DDAFKSLVTV (64 aa)).

It belongs to the universal ribosomal protein uS5 family. In terms of assembly, part of the 30S ribosomal subunit. Contacts proteins S4 and S8.

With S4 and S12 plays an important role in translational accuracy. Functionally, located at the back of the 30S subunit body where it stabilizes the conformation of the head with respect to the body. The polypeptide is Small ribosomal subunit protein uS5 (Aliarcobacter butzleri (strain RM4018) (Arcobacter butzleri)).